We begin with the raw amino-acid sequence, 931 residues long: Aconitate hydratase A (931 aa).

The disordered stretch occupies residues Ser-402–Gly-454. Cys-472, Cys-538, and Cys-541 together coordinate [4Fe-4S] cluster.

This sequence belongs to the aconitase/IPM isomerase family. [4Fe-4S] cluster is required as a cofactor.

The catalysed reaction is citrate = D-threo-isocitrate. It catalyses the reaction citrate = cis-aconitate + H2O. It carries out the reaction cis-aconitate + H2O = D-threo-isocitrate. Its pathway is carbohydrate metabolism; tricarboxylic acid cycle; isocitrate from oxaloacetate: step 2/2. Functionally, catalyzes the reversible isomerization of citrate to isocitrate via cis-aconitate in the tricarboxylic acid (TCA) cycle. Aconitase activity is important for the initiation of morphological and physiological differentiation of S.viridochromogenes. In addition, the apo form of AcnA (lacking the [4Fe-4S] cluster) functions as a RNA-binding regulatory protein, which binds to iron responsive elements (IREs) located on the untranslated region of certain mRNAs, including recA and ftsZ. Binding to IRE-like structures probably alters the target mRNA stability and regulates the protein amount. The apo form plays a regulatory role in oxidative stress response. The chain is Aconitate hydratase A from Streptomyces viridochromogenes (strain DSM 40736 / JCM 4977 / BCRC 1201 / Tue 494).